The following is an 832-amino-acid chain: Cadherin-like protein 26 (832 aa).

The first 27 residues, 1 to 27, serve as a signal peptide directing secretion; it reads MAMRSGRHPSLLLLLVLLLWLLQVSII. Topologically, residues 28 to 614 are extracellular; it reads DSVQQETDDL…ELADAEVGLH (587 aa). 4 Cadherin domains span residues 35–165, 166–275, 276–396, and 397–500; these read DDLT…APQF, PEKE…RPAF, TQEN…PPAF, and HPQS…VPTL. 4 N-linked (GlcNAc...) asparagine glycosylation sites follow: N81, N85, N171, and N177. An N-linked (GlcNAc...) asparagine glycan is attached at N462. A helical transmembrane segment spans residues 615–635; the sequence is VGALFPVCAAFVALAVALLFL. Residues 636–832 lie on the Cytoplasmic side of the membrane; the sequence is LRCYFVLEPK…EIYSESGVPS (197 aa). A disordered region spans residues 813-832; that stretch reads SLGSKATPFEEIYSESGVPS.

Homodimer. Component of a cadherin:catenin adhesion complex composed of at least of CDH26, beta-catenin/CTNNB1, alpha-catenin/CTNNA1 and p120 catenin/CTNND1. N-glycosylated. In terms of tissue distribution, expressed by epithelial cells of gastrointestinal tissue.

Its subcellular location is the cell membrane. Cadherins are calcium-dependent cell adhesion proteins. They preferentially interact with themselves in a homophilic manner in connecting cells; cadherins may thus contribute to the sorting of heterogeneous cell types. Ligand for integrins alpha-E/beta-7, ITGAE:ITGAB7, alpha-4/beta-7, ITGA4:ITGAB7 and alpha-4/beta-1, ITGA4:ITGAB1 through which modulates CD4(+) T cells activation. The sequence is that of Cadherin-like protein 26 (CDH26) from Homo sapiens (Human).